Reading from the N-terminus, the 336-residue chain is UDP-3-O-acylglucosamine N-acyltransferase (336 aa).

Histidine 233 (proton acceptor) is an active-site residue.

This sequence belongs to the transferase hexapeptide repeat family. LpxD subfamily. Homotrimer.

It catalyses the reaction a UDP-3-O-[(3R)-3-hydroxyacyl]-alpha-D-glucosamine + a (3R)-hydroxyacyl-[ACP] = a UDP-2-N,3-O-bis[(3R)-3-hydroxyacyl]-alpha-D-glucosamine + holo-[ACP] + H(+). It functions in the pathway bacterial outer membrane biogenesis; LPS lipid A biosynthesis. Catalyzes the N-acylation of UDP-3-O-acylglucosamine using 3-hydroxyacyl-ACP as the acyl donor. Is involved in the biosynthesis of lipid A, a phosphorylated glycolipid that anchors the lipopolysaccharide to the outer membrane of the cell. This Helicobacter pylori (strain HPAG1) protein is UDP-3-O-acylglucosamine N-acyltransferase.